The chain runs to 393 residues: MANDFLFTSESVSEGHPDKVADQISDAILDAIFEQDPRSRVAAETLTNTGLVVLAGEITTNAHVDYIQVARDTIKRIGYDNTDYGIDYKGCAVMVCYDKQSNDIAQGVDHASDDHLNTGAGDQGLMFGYACDETPELMPAPIYYAHRLVERQAQLRKDGRLPFLRPDAKSQVTMRYVDGKPHSIDTVVLSTQHHPDQSETPTKMKASFNEAIIEEIIKPVLPKEWLKDTRYLINPTGRFVIGGPQGDCGLTGRKIIVDTYGGACPHGGGAFSGKDPSKVDRSAAYAARYVAKNIVAAGLARQCQIQVAYAIGVAQPMNITVYTEGTGVIPDAKIAELVREFFDLRPKGIIQMLDLLRPIYQKTAAYGHFGREEPEFTWEATTQAAALRAAAGL.

His16 contacts ATP. Asp18 contributes to the Mg(2+) binding site. Glu44 is a K(+) binding site. L-methionine-binding residues include Glu57 and Gln100. A flexible loop region spans residues 100 to 110 (QSNDIAQGVDH). ATP-binding positions include 167 to 169 (DAK), 238 to 239 (RF), Asp247, 253 to 254 (RK), Ala270, and Lys274. Residue Asp247 participates in L-methionine binding. Lys278 provides a ligand contact to L-methionine.

Belongs to the AdoMet synthase family. As to quaternary structure, homotetramer; dimer of dimers. Requires Mg(2+) as cofactor. The cofactor is K(+).

Its subcellular location is the cytoplasm. It carries out the reaction L-methionine + ATP + H2O = S-adenosyl-L-methionine + phosphate + diphosphate. It functions in the pathway amino-acid biosynthesis; S-adenosyl-L-methionine biosynthesis; S-adenosyl-L-methionine from L-methionine: step 1/1. In terms of biological role, catalyzes the formation of S-adenosylmethionine (AdoMet) from methionine and ATP. The overall synthetic reaction is composed of two sequential steps, AdoMet formation and the subsequent tripolyphosphate hydrolysis which occurs prior to release of AdoMet from the enzyme. The sequence is that of S-adenosylmethionine synthase from Variovorax paradoxus (strain S110).